A 638-amino-acid chain; its full sequence is 9-cis-epoxycarotenoid dioxygenase NCED1, chloroplastic (638 aa).

The N-terminal 80 residues, 1-80 (MQRICPAHCS…QTEQEDEQLV (80 aa)), are a transit peptide targeting the chloroplast. Composition is skewed to low complexity over residues 28–37 (AASAAPQSPS), 44–69 (ASAA…TRTP), and 92–102 (TTNGRAAPSQS). Disordered stretches follow at residues 28 to 80 (AASA…EQLV) and 92 to 113 (TTNG…PAAA). Positions 331, 380, 446, and 624 each coordinate Fe cation.

The protein belongs to the carotenoid oxygenase family. Fe(2+) is required as a cofactor.

Its subcellular location is the plastid. The protein resides in the chloroplast. The enzyme catalyses a 9-cis-epoxycarotenoid + O2 = a 12'-apo-carotenal + 2-cis,4-trans-xanthoxin. It carries out the reaction 9-cis-violaxanthin + O2 = (3S,5R,6S)-5,6-epoxy-3-hydroxy-5,6-dihydro-12'-apo-beta-caroten-12'-al + 2-cis,4-trans-xanthoxin. It catalyses the reaction 9'-cis-neoxanthin + O2 = (3S,5R,6R)-3,5-dihydroxy-6,7-didehydro-5,6-dihydro-12'-apo-beta-caroten-12'-al + 2-cis,4-trans-xanthoxin. Functionally, has a 11,12(11',12') 9-cis epoxycarotenoid cleavage activity. Catalyzes the first step of abscisic-acid biosynthesis from carotenoids. The protein is 9-cis-epoxycarotenoid dioxygenase NCED1, chloroplastic of Oryza sativa subsp. japonica (Rice).